We begin with the raw amino-acid sequence, 178 residues long: Female-specific protein transformer (178 aa).

Composition is skewed to basic and acidic residues over residues 1–18 and 25–40; these read MKMDADSSCGADHRDSHG and REREQHGRTSNRDSKK. The segment at 1 to 117 is disordered; that stretch reads MKMDADSSCG…RRYNPPPKII (117 aa). Basic residues-rich tracts occupy residues 59–73 and 81–108; these read RRLRKRSPRSTRRSA and RRHRHRSRSRNRSRSRSSERRRRQRSPR.

The protein resides in the nucleus speckle. Functionally, member of the regulatory pathway controlling female somatic sexual differentiation, regulated by Sxl. Activates dsx female-specific splicing by promoting the formation of a splicing enhancer complex which consists of tra, tra2 and sr proteins. This Drosophila erecta (Fruit fly) protein is Female-specific protein transformer (tra).